The primary structure comprises 342 residues: Arrestin domain-containing protein 5 (342 aa).

The protein belongs to the arrestin family. As to expression, testis-enriched.

Its subcellular location is the membrane. Its function is as follows. Plays an essential role in spermatogenesis. May be involved in the anchoring of the sperm head to the tail during spermatogenesis by affecting SEC22A-mediated SUN5 and NDC1 transport and localization. The polypeptide is Arrestin domain-containing protein 5 (ARRDC5) (Homo sapiens (Human)).